We begin with the raw amino-acid sequence, 516 residues long: Maturase K (516 aa).

This sequence belongs to the intron maturase 2 family. MatK subfamily.

Its subcellular location is the plastid. The protein localises to the chloroplast. Usually encoded in the trnK tRNA gene intron. Probably assists in splicing its own and other chloroplast group II introns. This is Maturase K from Chara vulgaris (Common stonewort).